Consider the following 79-residue polypeptide: UPF0154 protein llmg_1186 (79 aa).

Residues 4–24 (ILAILLMVVCLLAGFFLGTWF) traverse the membrane as a helical segment.

This sequence belongs to the UPF0154 family.

Its subcellular location is the cell membrane. The sequence is that of UPF0154 protein llmg_1186 from Lactococcus lactis subsp. cremoris (strain MG1363).